Here is a 167-residue protein sequence, read N- to C-terminus: Protein-export protein SecB (167 aa).

Residues 1 to 20 form a disordered region; that stretch reads MASNDDAPVGAANGNGNTGA.

This sequence belongs to the SecB family. As to quaternary structure, homotetramer, a dimer of dimers. One homotetramer interacts with 1 SecA dimer.

It localises to the cytoplasm. Functionally, one of the proteins required for the normal export of preproteins out of the cell cytoplasm. It is a molecular chaperone that binds to a subset of precursor proteins, maintaining them in a translocation-competent state. It also specifically binds to its receptor SecA. This is Protein-export protein SecB from Mesorhizobium japonicum (strain LMG 29417 / CECT 9101 / MAFF 303099) (Mesorhizobium loti (strain MAFF 303099)).